The following is a 354-amino-acid chain: Methylthioribose-1-phosphate isomerase (354 aa).

Residue aspartate 246 is the Proton donor of the active site.

This sequence belongs to the eIF-2B alpha/beta/delta subunits family. MtnA subfamily.

Its subcellular location is the cytoplasm. It is found in the nucleus. The catalysed reaction is 5-(methylsulfanyl)-alpha-D-ribose 1-phosphate = 5-(methylsulfanyl)-D-ribulose 1-phosphate. It functions in the pathway amino-acid biosynthesis; L-methionine biosynthesis via salvage pathway; L-methionine from S-methyl-5-thio-alpha-D-ribose 1-phosphate: step 1/6. Functionally, catalyzes the interconversion of methylthioribose-1-phosphate (MTR-1-P) into methylthioribulose-1-phosphate (MTRu-1-P). The protein is Methylthioribose-1-phosphate isomerase (mri1) of Xenopus tropicalis (Western clawed frog).